The sequence spans 417 residues: NADH-quinone oxidoreductase subunit D (417 aa).

The protein belongs to the complex I 49 kDa subunit family. In terms of assembly, NDH-1 is composed of 14 different subunits. Subunits NuoB, C, D, E, F, and G constitute the peripheral sector of the complex.

The protein resides in the cell inner membrane. The enzyme catalyses a quinone + NADH + 5 H(+)(in) = a quinol + NAD(+) + 4 H(+)(out). NDH-1 shuttles electrons from NADH, via FMN and iron-sulfur (Fe-S) centers, to quinones in the respiratory chain. The immediate electron acceptor for the enzyme in this species is believed to be ubiquinone. Couples the redox reaction to proton translocation (for every two electrons transferred, four hydrogen ions are translocated across the cytoplasmic membrane), and thus conserves the redox energy in a proton gradient. This Nitrosococcus oceani (strain ATCC 19707 / BCRC 17464 / JCM 30415 / NCIMB 11848 / C-107) protein is NADH-quinone oxidoreductase subunit D.